The primary structure comprises 365 residues: Probable dual-specificity RNA methyltransferase RlmN (365 aa).

The active-site Proton acceptor is E99. A Radical SAM core domain is found at 105 to 344 (QSYGLSVCVT…CVVRQEHGTD (240 aa)). C112 and C349 are disulfide-bonded. [4Fe-4S] cluster-binding residues include C119, C123, and C126. S-adenosyl-L-methionine is bound by residues 171 to 172 (GE), S203, 227 to 229 (SLH), and N305. The active-site S-methylcysteine intermediate is C349.

The protein belongs to the radical SAM superfamily. RlmN family. The cofactor is [4Fe-4S] cluster.

It localises to the cytoplasm. It catalyses the reaction adenosine(2503) in 23S rRNA + 2 reduced [2Fe-2S]-[ferredoxin] + 2 S-adenosyl-L-methionine = 2-methyladenosine(2503) in 23S rRNA + 5'-deoxyadenosine + L-methionine + 2 oxidized [2Fe-2S]-[ferredoxin] + S-adenosyl-L-homocysteine. It carries out the reaction adenosine(37) in tRNA + 2 reduced [2Fe-2S]-[ferredoxin] + 2 S-adenosyl-L-methionine = 2-methyladenosine(37) in tRNA + 5'-deoxyadenosine + L-methionine + 2 oxidized [2Fe-2S]-[ferredoxin] + S-adenosyl-L-homocysteine. Specifically methylates position 2 of adenine 2503 in 23S rRNA and position 2 of adenine 37 in tRNAs. The polypeptide is Probable dual-specificity RNA methyltransferase RlmN (Lactococcus lactis subsp. cremoris (strain SK11)).